The sequence spans 544 residues: Chaperonin GroEL (544 aa).

ATP-binding positions include 29-32, 86-90, glycine 413, 476-478, and aspartate 492; these read TLGP, DGTTT, and NAA.

Belongs to the chaperonin (HSP60) family. In terms of assembly, forms a cylinder of 14 subunits composed of two heptameric rings stacked back-to-back. Interacts with the co-chaperonin GroES.

The protein localises to the cytoplasm. The catalysed reaction is ATP + H2O + a folded polypeptide = ADP + phosphate + an unfolded polypeptide.. Functionally, together with its co-chaperonin GroES, plays an essential role in assisting protein folding. The GroEL-GroES system forms a nano-cage that allows encapsulation of the non-native substrate proteins and provides a physical environment optimized to promote and accelerate protein folding. This chain is Chaperonin GroEL, found in Bacillus velezensis (strain DSM 23117 / BGSC 10A6 / LMG 26770 / FZB42) (Bacillus amyloliquefaciens subsp. plantarum).